Consider the following 540-residue polypeptide: Chaperonin GroEL (540 aa).

ATP is bound by residues 29–32, 86–90, glycine 413, 476–478, and aspartate 492; these read TLGP, DGTTT, and NAA.

This sequence belongs to the chaperonin (HSP60) family. Forms a cylinder of 14 subunits composed of two heptameric rings stacked back-to-back. Interacts with the co-chaperonin GroES.

It localises to the cytoplasm. The catalysed reaction is ATP + H2O + a folded polypeptide = ADP + phosphate + an unfolded polypeptide.. Functionally, together with its co-chaperonin GroES, plays an essential role in assisting protein folding. The GroEL-GroES system forms a nano-cage that allows encapsulation of the non-native substrate proteins and provides a physical environment optimized to promote and accelerate protein folding. The protein is Chaperonin GroEL of Streptococcus constellatus.